The following is a 497-amino-acid chain: L-arabinose isomerase (497 aa).

The Mn(2+) site is built by Glu-306, Glu-333, His-349, and His-448.

This sequence belongs to the arabinose isomerase family. It depends on Mn(2+) as a cofactor.

The enzyme catalyses beta-L-arabinopyranose = L-ribulose. The protein operates within carbohydrate degradation; L-arabinose degradation via L-ribulose; D-xylulose 5-phosphate from L-arabinose (bacterial route): step 1/3. Its function is as follows. Catalyzes the conversion of L-arabinose to L-ribulose. The protein is L-arabinose isomerase of Vibrio parahaemolyticus serotype O3:K6 (strain RIMD 2210633).